The chain runs to 239 residues: Large ribosomal subunit protein uL2 (239 aa).

The disordered stretch occupies residues 203–239 (PFGGKEHHPGKPTTTSRRAPPGRKVGHIAARRTGRRK). Residues 222-239 (PPGRKVGHIAARRTGRRK) show a composition bias toward basic residues.

This sequence belongs to the universal ribosomal protein uL2 family. Part of the 50S ribosomal subunit. Forms a bridge to the 30S subunit in the 70S ribosome.

In terms of biological role, one of the primary rRNA binding proteins. Required for association of the 30S and 50S subunits to form the 70S ribosome, for tRNA binding and peptide bond formation. It has been suggested to have peptidyltransferase activity; this is somewhat controversial. Makes several contacts with the 16S rRNA in the 70S ribosome. This is Large ribosomal subunit protein uL2 from Pyrococcus abyssi (strain GE5 / Orsay).